The chain runs to 75 residues: Acyl carrier protein (75 aa).

The region spanning 1–75 (MSVFDKVKSI…DAVNYIKENQ (75 aa)) is the Carrier domain. The residue at position 35 (serine 35) is an O-(pantetheine 4'-phosphoryl)serine.

This sequence belongs to the acyl carrier protein (ACP) family. In terms of processing, 4'-phosphopantetheine is transferred from CoA to a specific serine of apo-ACP by AcpS. This modification is essential for activity because fatty acids are bound in thioester linkage to the sulfhydryl of the prosthetic group.

It is found in the cytoplasm. It functions in the pathway lipid metabolism; fatty acid biosynthesis. In terms of biological role, carrier of the growing fatty acid chain in fatty acid biosynthesis. This is Acyl carrier protein from Desulfitobacterium hafniense (strain Y51).